A 788-amino-acid polypeptide reads, in one-letter code: Ribonucleoside-diphosphate reductase subunit alpha (788 aa).

Residues I2–G92 form the ATP-cone domain. ATP contacts are provided by residues K6, E12–K18, and T52. GDP is bound at residue T200. Residues C216 and C497 are joined by a disulfide bond. DTTP contacts are provided by residues D223–I225 and R253. Position 424 (N424) interacts with GDP. N424 (proton acceptor) is an active-site residue. C426 (cysteine radical intermediate) is an active-site residue. Residues E428 and S661 to I663 each bind GDP. The active-site Proton acceptor is the E428.

It belongs to the ribonucleoside diphosphate reductase large chain family. As to quaternary structure, tetramer of two alpha and two beta subunits.

It catalyses the reaction a 2'-deoxyribonucleoside 5'-diphosphate + [thioredoxin]-disulfide + H2O = a ribonucleoside 5'-diphosphate + [thioredoxin]-dithiol. Under complex allosteric control mediated by deoxynucleoside triphosphates and ATP binding to separate specificity and activation sites on the alpha subunit. The type of nucleotide bound at the specificity site determines substrate preference. It seems probable that ATP makes the enzyme reduce CDP and UDP, dGTP favors ADP reduction and dTTP favors GDP reduction. Stimulated by ATP and inhibited by dATP binding to the activity site. Provides the precursors necessary for DNA synthesis. Catalyzes the biosynthesis of deoxyribonucleotides from the corresponding ribonucleotides. This Helicobacter pylori (strain J99 / ATCC 700824) (Campylobacter pylori J99) protein is Ribonucleoside-diphosphate reductase subunit alpha (nrdA).